The primary structure comprises 160 residues: Thy-1 membrane glycoprotein (160 aa).

An N-terminal signal peptide occupies residues 1-19 (MNPTVSIAVILTVLQAAHC). Q20 carries the post-translational modification Pyrrolidone carboxylic acid. The region spanning 20 to 120 (QMIRDLSACL…YTGNQIKNIT (101 aa)) is the Ig-like V-type domain. 2 disulfides stabilise this stretch: C28–C129 and C38–C103. N-linked (GlcNAc...) asparagine glycosylation is found at N42, N78, and N118. Residue C129 is the site of GPI-anchor amidated cysteine attachment. The propeptide at 130–160 (VRLSLLIQNTSWLLLLLLSLPLLQAVDFVSL) is removed in mature form. Residue N138 is glycosylated (N-linked (GlcNAc...) asparagine).

The N-terminus is blocked. In terms of tissue distribution, forebrain, cerebellum and tectum.

It localises to the cell membrane. Functionally, may play a role in cell-cell or cell-ligand interactions during synaptogenesis and other events in the brain. The polypeptide is Thy-1 membrane glycoprotein (THY1) (Gallus gallus (Chicken)).